A 253-amino-acid chain; its full sequence is tRNA uridine(34) hydroxylase (253 aa).

Residues 127–221 (HGRPLVLLDT…YFEDVGGEGY (95 aa)) enclose the Rhodanese domain. The active-site Cysteine persulfide intermediate is the cysteine 181.

Belongs to the TrhO family.

It catalyses the reaction uridine(34) in tRNA + AH2 + O2 = 5-hydroxyuridine(34) in tRNA + A + H2O. Functionally, catalyzes oxygen-dependent 5-hydroxyuridine (ho5U) modification at position 34 in tRNAs. The protein is tRNA uridine(34) hydroxylase of Xanthomonas campestris pv. campestris (strain B100).